Reading from the N-terminus, the 256-residue chain is NH(3)-dependent NAD(+) synthetase (256 aa).

An ATP-binding site is contributed by 29–36; the sequence is GISGGIDS. Asp35 provides a ligand contact to Mg(2+). Arg115 is a binding site for deamido-NAD(+). An ATP-binding site is contributed by Thr135. Glu140 is a binding site for Mg(2+). Deamido-NAD(+)-binding residues include Lys148 and Asp155. ATP contacts are provided by Lys164 and Ser186. 245–246 contributes to the deamido-NAD(+) binding site; sequence HK.

The protein belongs to the NAD synthetase family. In terms of assembly, homodimer.

The enzyme catalyses deamido-NAD(+) + NH4(+) + ATP = AMP + diphosphate + NAD(+) + H(+). Its pathway is cofactor biosynthesis; NAD(+) biosynthesis; NAD(+) from deamido-NAD(+) (ammonia route): step 1/1. In terms of biological role, catalyzes the ATP-dependent amidation of deamido-NAD to form NAD. Uses ammonia as a nitrogen source. The chain is NH(3)-dependent NAD(+) synthetase from Methanosarcina acetivorans (strain ATCC 35395 / DSM 2834 / JCM 12185 / C2A).